The primary structure comprises 365 residues: NAD(P)H-quinone oxidoreductase subunit 1, chloroplastic (365 aa).

A run of 6 helical transmembrane segments spans residues 30 to 50 (LVPILTLVLGITIGILVIVWL), 104 to 124 (IAVISTLLSYSVIPFGYHFVL), 129 to 149 (IGVFLWIAISSIAPIGLLMSG), 253 to 273 (FGLFYVASYLNLLVSSLFVAV), 302 to 322 (VFGTTMGILITLVKTYLFLFI), and 338 to 358 (LLNLGWKFLLPISLGNLLLTT).

This sequence belongs to the complex I subunit 1 family. In terms of assembly, NDH is composed of at least 16 different subunits, 5 of which are encoded in the nucleus.

The protein resides in the plastid. Its subcellular location is the chloroplast thylakoid membrane. The catalysed reaction is a plastoquinone + NADH + (n+1) H(+)(in) = a plastoquinol + NAD(+) + n H(+)(out). The enzyme catalyses a plastoquinone + NADPH + (n+1) H(+)(in) = a plastoquinol + NADP(+) + n H(+)(out). Its function is as follows. NDH shuttles electrons from NAD(P)H:plastoquinone, via FMN and iron-sulfur (Fe-S) centers, to quinones in the photosynthetic chain and possibly in a chloroplast respiratory chain. The immediate electron acceptor for the enzyme in this species is believed to be plastoquinone. Couples the redox reaction to proton translocation, and thus conserves the redox energy in a proton gradient. This Populus trichocarpa (Western balsam poplar) protein is NAD(P)H-quinone oxidoreductase subunit 1, chloroplastic.